The primary structure comprises 584 residues: J protein JJJ2 (584 aa).

The J domain occupies 13–77; that stretch reads TYYSILGLTS…DQKLRYDRDL (65 aa). The interval 216-312 is disordered; it reads YSEDPNSCLG…FSSGSHDSNL (97 aa). Position 229 is a phosphoserine (Ser229). Low complexity predominate over residues 241–253; the sequence is QQQQQQQQQQQQQ. The span at 269-282 shows a compositional bias: basic and acidic residues; the sequence is KDNKESKRESRVSP. A compositionally biased stretch (polar residues) spans 299–312; sequence KTSTFSSGSHDSNL.

It localises to the cytoplasm. Its subcellular location is the nucleus. This is J protein JJJ2 (JJJ2) from Saccharomyces cerevisiae (strain YJM789) (Baker's yeast).